Consider the following 763-residue polypeptide: Probable ubiquitin carboxyl-terminal hydrolase MINDY-4 (763 aa).

S143 carries the post-translational modification Phosphoserine. The segment at 154–368 (SSKRSSHKSR…SQPASLRKNQ (215 aa)) is disordered. The span at 180–202 (EKTDKLPMSEPSLDTKRMGEKVR) shows a compositional bias: basic and acidic residues. 2 positions are modified to phosphoserine: S220 and S224. A compositionally biased stretch (polar residues) spans 252 to 261 (ELSTHTSTCP). A compositionally biased stretch (low complexity) spans 267–278 (PASSTASTSRSP). Phosphoserine is present on S296. A compositionally biased stretch (basic and acidic residues) spans 346 to 355 (TQERPERAFE). The span at 357 to 368 (QGSQPASLRKNQ) shows a compositional bias: polar residues. The active-site Nucleophile is the C463. Residue H683 is the Proton acceptor of the active site.

Belongs to the MINDY deubiquitinase family. FAM188 subfamily.

The enzyme catalyses Thiol-dependent hydrolysis of ester, thioester, amide, peptide and isopeptide bonds formed by the C-terminal Gly of ubiquitin (a 76-residue protein attached to proteins as an intracellular targeting signal).. Its function is as follows. Probable hydrolase that can remove 'Lys-48'-linked conjugated ubiquitin from proteins. The chain is Probable ubiquitin carboxyl-terminal hydrolase MINDY-4 (MINDY4) from Bos taurus (Bovine).